Reading from the N-terminus, the 329-residue chain is 2-oxoglutarate-dependent dioxygenase mpl2 (329 aa).

The region spanning 183–288 (PACPLRLLHY…RYSVVFFFDG (106 aa)) is the Fe2OG dioxygenase domain. Residues histidine 211, aspartate 213, and histidine 269 each contribute to the Fe cation site. Arginine 279 is a 2-oxoglutarate binding site.

This sequence belongs to the iron/ascorbate-dependent oxidoreductase family. Fe(2+) serves as cofactor.

The protein operates within mycotoxin biosynthesis. 2-oxoglutarate-dependent dioxygenase; part of the gene cluster that mediates the biosynthesis of the mycotoxin citrinin, a hepato-nephrotoxic compound to humans due to inhibition of respiration complex III. The pathway begins with the synthesis of a keto-aldehyde intermediate by the citrinin PKS (pksCT) from successive condensations of 4 malonyl-CoA units, presumably with a simple acetyl-CoA starter unit. Release of the keto-aldehyde intermediate is consistent with the presence of the C-terminal reductive release domain. Mp11 collaborates with pksCT by catalyzing the hydrolysis of ACP-bound acyl intermediates to free the ACP from stalled intermediates. Mpl2 then catalyzes the oxidation of the C-12 methyl of the ketone intermediate to an alcohol intermediate which is further oxidized by the oxidoreductase mpl7 to produce a bisaldehyde intermediate. The fourth catalytic step is catalyzed by the mpl4 aldehyde dehydrogenase. The final transformation is the reduction of C-3 by mpl6 to provide the chemically stable citrinin nucleus. The chain is 2-oxoglutarate-dependent dioxygenase mpl2 from Monascus purpureus (Red mold).